Here is a 1829-residue protein sequence, read N- to C-terminus: Protein let-418 (1829 aa).

Composition is skewed to acidic residues over residues 1-17 and 25-39; these read MSTE…ESME and ATEE…EQGD. Disordered regions lie at residues 1 to 81 and 147 to 198; these read MSTE…YNST and MAAQ…SDQE. The segment covering 48-63 has biased composition (basic residues); that stretch reads RSSRKKGGKGGKKGSK. PHD-type zinc fingers lie at residues 256–303 and 317–365; these read NDYC…CIEH and DEFC…CETV. 2 Chromo domains span residues 401-458 and 489-550; these read LKPP…PPEF and MQIH…NEDI. Positions 614–798 constitute a Helicase ATP-binding domain; that stretch reads RHCWSNGTDA…FHLLNFLSKE (185 aa). 627–634 contributes to the ATP binding site; that stretch reads DEMGLGKT. Positions 749–752 match the DEAH box motif; that stretch reads DEAH. The Helicase C-terminal domain maps to 930 to 1093; that stretch reads LLQKMLRKLK…GKTMSKTELD (164 aa). Disordered stretches follow at residues 1168-1198, 1234-1289, 1415-1495, and 1745-1829; these read ASYQ…EPDP, SENM…MPPL, AANG…ARPS, and NGER…PMET. The span at 1177-1186 shows a compositional bias: acidic residues; that stretch reads GQEEEEEEET. Polar residues-rich tracts occupy residues 1234-1247 and 1418-1427; these read SENM…QNQT and GSAQGSSRST. The segment covering 1429 to 1444 has biased composition (basic and acidic residues); that stretch reads KPKEEPKEEPMEKEDA. The span at 1446–1455 shows a compositional bias: polar residues; the sequence is ETVNGATSEP. Basic and acidic residues predominate over residues 1474 to 1490; sequence DEAKEPKEEPIETEKPR. Acidic residues predominate over residues 1749–1773; the sequence is MEEDEPVEAEEEEGVKQEPDDETQD. Residues 1792–1811 show a composition bias toward low complexity; the sequence is DVPSTSAAAAVSSETAADAE. The segment covering 1819 to 1829 has biased composition (acidic residues); it reads APTDEPEPMET.

Component of the MEC (MEP-1-containing complex) complex that contains let-418, mep-1 and hda-1. Component of a NURD complex that contains let-418, hda-1, lin-40 and lin-53. Interacts with lin-1. Interacts with pie-1. Interacts with akir-1. Expressed in embryos and larva.

The protein localises to the nucleus. In terms of biological role, part of a NuRD (Nucleosome Remodeling and Deacetylase) complex which is implicated in the synMuv B pathway that negatively regulates specification of vulval cell fate. This negative regulation is thought to be mediated via interaction with the promoter of lin-39, a key regulator in vulva development, and is dependent on the presence lin-1. Contributes to negative regulation of lag-2 which is expressed in the gut during larval development. Has a broad role in development. In association with akir-1, plays a role in regulating the transcription of antimicrobial peptide genes in response to fungal infection. This Caenorhabditis elegans protein is Protein let-418.